The chain runs to 456 residues: Bifunctional protein GlmU (456 aa).

The tract at residues methionine 1–arginine 229 is pyrophosphorylase. UDP-N-acetyl-alpha-D-glucosamine-binding positions include leucine 11–glycine 14, lysine 25, glutamine 76, glycine 81–threonine 82, tyrosine 103–aspartate 105, glycine 140, glutamate 154, asparagine 169, and asparagine 227. Residue aspartate 105 participates in Mg(2+) binding. Position 227 (asparagine 227) interacts with Mg(2+). Residues leucine 230–alanine 250 are linker. Residues glycine 251–lysine 456 are N-acetyltransferase. UDP-N-acetyl-alpha-D-glucosamine-binding residues include arginine 333 and lysine 351. Catalysis depends on histidine 363, which acts as the Proton acceptor. Residues tyrosine 366 and asparagine 377 each contribute to the UDP-N-acetyl-alpha-D-glucosamine site. Acetyl-CoA-binding positions include alanine 380, asparagine 386–tyrosine 387, serine 405, alanine 423, and arginine 440.

It in the N-terminal section; belongs to the N-acetylglucosamine-1-phosphate uridyltransferase family. In the C-terminal section; belongs to the transferase hexapeptide repeat family. In terms of assembly, homotrimer. Mg(2+) serves as cofactor.

The protein resides in the cytoplasm. It catalyses the reaction alpha-D-glucosamine 1-phosphate + acetyl-CoA = N-acetyl-alpha-D-glucosamine 1-phosphate + CoA + H(+). The enzyme catalyses N-acetyl-alpha-D-glucosamine 1-phosphate + UTP + H(+) = UDP-N-acetyl-alpha-D-glucosamine + diphosphate. It participates in nucleotide-sugar biosynthesis; UDP-N-acetyl-alpha-D-glucosamine biosynthesis; N-acetyl-alpha-D-glucosamine 1-phosphate from alpha-D-glucosamine 6-phosphate (route II): step 2/2. It functions in the pathway nucleotide-sugar biosynthesis; UDP-N-acetyl-alpha-D-glucosamine biosynthesis; UDP-N-acetyl-alpha-D-glucosamine from N-acetyl-alpha-D-glucosamine 1-phosphate: step 1/1. The protein operates within bacterial outer membrane biogenesis; LPS lipid A biosynthesis. Functionally, catalyzes the last two sequential reactions in the de novo biosynthetic pathway for UDP-N-acetylglucosamine (UDP-GlcNAc). The C-terminal domain catalyzes the transfer of acetyl group from acetyl coenzyme A to glucosamine-1-phosphate (GlcN-1-P) to produce N-acetylglucosamine-1-phosphate (GlcNAc-1-P), which is converted into UDP-GlcNAc by the transfer of uridine 5-monophosphate (from uridine 5-triphosphate), a reaction catalyzed by the N-terminal domain. The sequence is that of Bifunctional protein GlmU from Escherichia coli O139:H28 (strain E24377A / ETEC).